The sequence spans 316 residues: Glutathione synthetase (316 aa).

Residues 123–309 enclose the ATP-grasp domain; that stretch reads NEKISTLSFK…ISGILLDSIE (187 aa). 149-206 serves as a coordination point for ATP; the sequence is FQEKFGDIILKPINKMGGDSVFYVKKNDPNVSVIIDQLTNYGNSFCLIQEYIKEILNG. Residues Glu-280 and Asn-282 each contribute to the Mg(2+) site.

This sequence belongs to the prokaryotic GSH synthase family. It depends on Mg(2+) as a cofactor. Requires Mn(2+) as cofactor.

It carries out the reaction gamma-L-glutamyl-L-cysteine + glycine + ATP = glutathione + ADP + phosphate + H(+). Its pathway is sulfur metabolism; glutathione biosynthesis; glutathione from L-cysteine and L-glutamate: step 2/2. The polypeptide is Glutathione synthetase (Wigglesworthia glossinidia brevipalpis).